We begin with the raw amino-acid sequence, 275 residues long: MPRKAKEYPEEGEFVVATVKNIHPYGAFLTLDEYPGKEGFMHISEVAPTWVKNIRDYLKEGQKIVAKVIRVDPEKGHIDLSLKRVNQQQRKAKLQEYKRAQKAENLLKMAAEKLGKDFETAWREVWVPLEEEYGEVYAAFEDAAQNGMDVLKGLISDEWIEALKPIIEAYVEIPTVTIDAEFEITVPKPNGIEIIKEALIKARDRANQEKDIEVKFSYQGAPRYRIDITAPDYYKAEEVLEDIAEEILRVIKEAGGEATLIRKEKRIKKVKKRGS.

An S1 motif domain is found at 12-83 (GEFVVATVKN…EKGHIDLSLK (72 aa)).

This sequence belongs to the eIF-2-alpha family. In terms of assembly, heterotrimer composed of an alpha, a beta and a gamma chain.

EIF-2 functions in the early steps of protein synthesis by forming a ternary complex with GTP and initiator tRNA. The sequence is that of Translation initiation factor 2 subunit alpha from Thermococcus kodakarensis (strain ATCC BAA-918 / JCM 12380 / KOD1) (Pyrococcus kodakaraensis (strain KOD1)).